We begin with the raw amino-acid sequence, 131 residues long: Histone H2A.2 (131 aa).

N-acetylserine is present on Ser2. N6-acetyllysine occurs at positions 5 and 8. Gln106 carries the N5-methylglutamine modification. Ser128 carries the post-translational modification Phosphoserine. Positions 128–129 (SQ) match the [ST]-Q motif motif.

This sequence belongs to the histone H2A family. As to quaternary structure, the nucleosome is a histone octamer containing two molecules each of H2A, H2B, H3 and H4 assembled in one H3-H4 heterotetramer and two H2A-H2B heterodimers. The octamer wraps approximately 147 bp of DNA. In terms of processing, phosphorylated to form H2AS128ph (gamma-H2A) in response to DNA double-strand breaks (DSBs) generated by exogenous genotoxic agents and by stalled replication forks. Phosphorylation is dependent on the DNA damage checkpoint kinases MEC1/ATR and TEL1/ATM, spreads on either side of a detected DSB site and may mark the surrounding chromatin for recruitment of proteins required for DNA damage signaling and repair. Gamma-H2A is removed from the DNA prior to the strand invasion-primer extension step of the repair process and subsequently dephosphorylated by PPH3, a component of the histone H2A phosphatase complex (HTP-C). Dephosphorylation is necessary for efficient recovery from the DNA damage checkpoint. Acetylated by ESA1 to form H2AK4ac and H2AK7ac.

The protein localises to the nucleus. Its subcellular location is the chromosome. Its function is as follows. Core component of nucleosome which plays a central role in DNA double strand break (DSB) repair. Nucleosomes wrap and compact DNA into chromatin, limiting DNA accessibility to the cellular machineries which require DNA as a template. Histones thereby play a central role in transcription regulation, DNA repair, DNA replication and chromosomal stability. DNA accessibility is regulated via a complex set of post-translational modifications of histones, also called histone code, and nucleosome remodeling. In Candida glabrata (strain ATCC 2001 / BCRC 20586 / JCM 3761 / NBRC 0622 / NRRL Y-65 / CBS 138) (Yeast), this protein is Histone H2A.2 (HTA2).